Here is a 495-residue protein sequence, read N- to C-terminus: BUB3-interacting and GLEBS motif-containing protein ZNF207 (495 aa).

A microtubule-binding region region spans residues 1–92 (MGRKKKKQLK…EGIPEKDMDE (92 aa)). 2 consecutive C2H2-type zinc fingers follow at residues 11 to 34 (PWCW…KAKH) and 35 to 58 (FKCH…MQVH). Residues 99 to 111 (QKTQESQKKKQQD) are compositionally biased toward basic and acidic residues. Disordered regions lie at residues 99-161 (QKTQ…PGIP), 252-292 (PPAP…SNSE), and 316-372 (VGTD…ATLT). The span at 112 to 121 (DSDEYDDDES) shows a compositional bias: acidic residues. Positions 127-136 (FQPQPVQPQQ) are enriched in polar residues. The segment covering 142–161 (MAQPGLPPVPGAPGMPPGIP) has biased composition (pro residues). Composition is skewed to low complexity over residues 283–292 (SSSTASSNSE) and 326–372 (TPAA…ATLT). Positions 376 to 408 (ATSKLIHPDEDISLEERRAQLPKYQRNLPRPGQ) are GLEBS. A disordered region spans residues 462–495 (PYGQGPPMVPPYQGGPPRPPMGMRPPVMSQGGRY). The segment covering 464 to 484 (GQGPPMVPPYQGGPPRPPMGM) has biased composition (pro residues).

As to quaternary structure, interacts (via GLEBS region) with BUB3. In terms of tissue distribution, in day-13 embryo, strongly expressed in the nervous system (brain, spinal cord and dorsal root ganglia), with strong to weak expression in other regions. Continues to be strongly expressed in the neonatal brain while expression is weak in the brain and spinal cord of adult.

Its subcellular location is the nucleus. It localises to the chromosome. The protein localises to the centromere. The protein resides in the kinetochore. It is found in the cytoplasm. Its subcellular location is the cytoskeleton. It localises to the spindle. Its function is as follows. Kinetochore- and microtubule-binding protein that plays a key role in spindle assembly. ZNF207/BuGZ is mainly composed of disordered low-complexity regions and undergoes phase transition or coacervation to form temperature-dependent liquid droplets. Coacervation promotes microtubule bundling and concentrates tubulin, promoting microtubule polymerization and assembly of spindle and spindle matrix by concentrating its building blocks. Also acts as a regulator of mitotic chromosome alignment by mediating the stability and kinetochore loading of BUB3. Mechanisms by which BUB3 is protected are unclear: according to a first report, ZNF207/BuGZ may act by blocking ubiquitination and proteasomal degradation of BUB3. According to another report, the stabilization is independent of the proteasome. This is BUB3-interacting and GLEBS motif-containing protein ZNF207 from Mus musculus (Mouse).